Here is a 330-residue protein sequence, read N- to C-terminus: Cathepsin K (330 aa).

The signal sequence occupies residues 1–16; sequence MWGLEVLLLLPMASFA. A propeptide spans 17-115 (activation peptide); sequence LYPEEILDTQ…TLYIPDWESR (99 aa). N104 is a glycosylation site (N-linked (GlcNAc...) asparagine). 3 disulfides stabilise this stretch: C137/C178, C171/C211, and C270/C319. C140 is an active-site residue. Catalysis depends on residues H277 and N297.

This sequence belongs to the peptidase C1 family.

It is found in the lysosome. The protein resides in the secreted. Its subcellular location is the apical cell membrane. It carries out the reaction Broad proteolytic activity. With small-molecule substrates and inhibitors, the major determinant of specificity is P2, which is preferably Leu, Met &gt; Phe, and not Arg.. Its function is as follows. Thiol protease involved in osteoclastic bone resorption and may participate partially in the disorder of bone remodeling. Displays potent endoprotease activity against fibrinogen at acid pH. May play an important role in extracellular matrix degradation. Involved in the release of thyroid hormone thyroxine (T4) by limited proteolysis of TG/thyroglobulin in the thyroid follicle lumen. This is Cathepsin K (CTSK) from Canis lupus familiaris (Dog).